The sequence spans 866 residues: Protein mono-ADP-ribosyltransferase PARP9 (866 aa).

At serine 42 the chain carries Phosphoserine. Macro domains are found at residues 109 to 298 and 313 to 492; these read QRVF…ESIL and ASTM…TKRS. The 219-residue stretch at 635 to 853 folds into the PARP catalytic domain; that stretch reads TNQQEKLDKM…YSSGPGMVSS (219 aa).

Belongs to the ARTD/PARP family. Forms a stable complex with E3 ligase DTX3L; the interaction is required for PARP9 mediated ADP-ribosylation of ubiquitin. Interacts (via PARP catalytic domain) with DTX3L (via N-terminus). Forms a complex with STAT1 and DTX3L independently of IFNB1 or IFNG-mediated STAT1 'Tyr-701' phosphorylation. Forms a complex with STAT1, DTX3L and histone H2B H2BC9/H2BJ; the interaction is likely to induce H2BC9/H2BJ ubiquitination. Interacts (via N-terminus) with STAT1. Interacts with PARP14 in IFNG-stimulated macrophages; the interaction prevents PARP14-mediated STAT1 and STAT6 ADP-riboslylation. Interacts with PARP1 (when poly-ADP-ribosylated). In terms of processing, ADP-ribosylated by PARP14. Highly expressed in the thymus and intestine. Expressed in macrophages.

The protein resides in the cytoplasm. Its subcellular location is the cytosol. It localises to the nucleus. It carries out the reaction [protein]-C-terminal glycine + NAD(+) = [protein]-C-terminal O-(ADP-D-ribosyl)-glycine + nicotinamide. With respect to regulation, binding to poly(ADP-ribose) does not affect its activity. ADP-ribosyltransferase which, in association with E3 ligase DTX3L, plays a role in DNA damage repair and in immune responses including interferon-mediated antiviral defenses. Within the complex, enhances DTX3L E3 ligase activity which is further enhanced by PARP9 binding to poly(ADP-ribose). In addition, positively regulates DTXL3 protein levels. In association with DTX3L and in presence of E1 and E2 enzymes, mediates NAD(+)-dependent mono-ADP-ribosylation of ubiquitin which prevents ubiquitin conjugation to substrates such as histones. During DNA repair, PARP1 recruits PARP9/BAL1-DTX3L complex to DNA damage sites via PARP9 binding to ribosylated PARP1. Subsequent PARP1-dependent PARP9/BAL1-DTX3L-mediated ubiquitination promotes the rapid and specific recruitment of 53BP1/TP53BP1, UIMC1/RAP80, and BRCA1 to DNA damage sites. In response to DNA damage, PARP9-DTX3L complex is required for efficient non-homologous end joining (NHEJ) but the complex function is restrained by PARP9 activity. Dispensable for B-cell receptor (BCR) assembly through V(D)J recombination and class switch recombination (CSR). In macrophages, positively regulates pro-inflammatory cytokines production in response to IFNG stimulation by suppressing PARP14-mediated STAT1 ADP-ribosylation and thus promoting STAT1 phosphorylation. Also suppresses PARP14-mediated STAT6 ADP-ribosylation. The protein is Protein mono-ADP-ribosyltransferase PARP9 (Parp9) of Mus musculus (Mouse).